The chain runs to 147 residues: Large ribosomal subunit protein uL13 (147 aa).

The protein belongs to the universal ribosomal protein uL13 family. In terms of assembly, part of the 50S ribosomal subunit.

In terms of biological role, this protein is one of the early assembly proteins of the 50S ribosomal subunit, although it is not seen to bind rRNA by itself. It is important during the early stages of 50S assembly. The polypeptide is Large ribosomal subunit protein uL13 (Micrococcus luteus (strain ATCC 4698 / DSM 20030 / JCM 1464 / CCM 169 / CCUG 5858 / IAM 1056 / NBRC 3333 / NCIMB 9278 / NCTC 2665 / VKM Ac-2230) (Micrococcus lysodeikticus)).